We begin with the raw amino-acid sequence, 113 residues long: UPF0342 protein SEQ_0993 (113 aa).

This sequence belongs to the UPF0342 family.

This chain is UPF0342 protein SEQ_0993, found in Streptococcus equi subsp. equi (strain 4047).